The chain runs to 105 residues: Replication restart protein PriB (105 aa).

The SSB domain occupies 1-102 (MTANRLTLSG…LHAEQIELID (102 aa)).

The protein belongs to the PriB family. As to quaternary structure, homodimer. Interacts with PriA and DnaT. Component of the replication restart primosome. Primosome assembly occurs via a 'hand-off' mechanism. PriA binds to replication forks, subsequently PriB then DnaT bind; DnaT then displaces ssDNA to generate the helicase loading substrate.

Involved in the restart of stalled replication forks, which reloads the replicative helicase on sites other than the origin of replication; the PriA-PriB pathway is the major replication restart pathway. During primosome assembly it facilitates complex formation between PriA and DnaT on DNA; stabilizes PriA on DNA. Stimulates the DNA unwinding activity of PriA helicase. This is Replication restart protein PriB from Erwinia tasmaniensis (strain DSM 17950 / CFBP 7177 / CIP 109463 / NCPPB 4357 / Et1/99).